A 446-amino-acid chain; its full sequence is Phosphoglucosamine mutase (446 aa).

Ser103 acts as the Phosphoserine intermediate in catalysis. Mg(2+)-binding residues include Ser103, Asp242, Asp244, and Asp246. Residue Ser103 is modified to Phosphoserine.

This sequence belongs to the phosphohexose mutase family. It depends on Mg(2+) as a cofactor. In terms of processing, activated by phosphorylation.

It catalyses the reaction alpha-D-glucosamine 1-phosphate = D-glucosamine 6-phosphate. In terms of biological role, catalyzes the conversion of glucosamine-6-phosphate to glucosamine-1-phosphate. In Vibrio cholerae serotype O1 (strain ATCC 39541 / Classical Ogawa 395 / O395), this protein is Phosphoglucosamine mutase.